A 122-amino-acid chain; its full sequence is Large ribosomal subunit protein uL14 (122 aa).

It belongs to the universal ribosomal protein uL14 family. As to quaternary structure, part of the 50S ribosomal subunit. Forms a cluster with proteins L3 and L19. In the 70S ribosome, L14 and L19 interact and together make contacts with the 16S rRNA in bridges B5 and B8.

In terms of biological role, binds to 23S rRNA. Forms part of two intersubunit bridges in the 70S ribosome. The polypeptide is Large ribosomal subunit protein uL14 (Streptococcus pyogenes serotype M2 (strain MGAS10270)).